We begin with the raw amino-acid sequence, 307 residues long: MVQQLSLFGSIGDDGYDLLISTLTTISGNPPLLYNSLCTVWKPNPSYDVENVNSRNQLVEPNRIKLSKEVPFSYLIDETMMDKPLNFRILKSFTNDKIPLNYAMTRNILHNTVPQVTNFNSTNEDQNNSKHTEDTVNESRNSDDIIDVDMDASPAPSNESCSPWSLQISDIPAAGNNRSVSMQTIAETIILSSAGKNSSVSSLMNGLGYVFEFQYLTIGVKFFMKHGLILELQKIWQIEEAGNSQITSGGFLLKAYINVSRGTDIDRINYTETALMNLKKELQGYIELSVPDRQSMDSRVAHGNILI.

Over residues Thr117 to Gln126 the composition is skewed to polar residues. Positions Thr117–Ser162 are disordered.

This sequence belongs to the Mediator complex subunit 18 family. In terms of assembly, component of the Mediator complex, which is composed of at least 21 subunits that form three structurally distinct submodules. The Mediator head module contains MED6, MED8, MED11, SRB4/MED17, SRB5/MED18, ROX3/MED19, SRB2/MED20 and SRB6/MED22, the middle module contains MED1, MED4, NUT1/MED5, MED7, CSE2/MED9, NUT2/MED10, SRB7/MED21 and SOH1/MED31, and the tail module contains MED2, PGD1/MED3, RGR1/MED14, GAL11/MED15 and SIN4/MED16. The head and the middle modules interact directly with RNA polymerase II, whereas the elongated tail module interacts with gene-specific regulatory proteins. SRB5/MED18 interacts directly with MED8 and SRB2/MED20.

It localises to the nucleus. Its function is as follows. Component of the Mediator complex, a coactivator involved in the regulated transcription of nearly all RNA polymerase II-dependent genes. Mediator functions as a bridge to convey information from gene-specific regulatory proteins to the basal RNA polymerase II transcription machinery. The Mediator complex, having a compact conformation in its free form, is recruited to promoters by direct interactions with regulatory proteins and serves for the assembly of a functional preinitiation complex with RNA polymerase II and the general transcription factors. The Mediator complex unfolds to an extended conformation and partially surrounds RNA polymerase II, specifically interacting with the unphosphorylated form of the C-terminal domain (CTD) of RNA polymerase II. The Mediator complex dissociates from the RNA polymerase II holoenzyme and stays at the promoter when transcriptional elongation begins. This chain is Mediator of RNA polymerase II transcription subunit 18 (SRB5), found in Saccharomyces cerevisiae (strain ATCC 204508 / S288c) (Baker's yeast).